A 79-amino-acid polypeptide reads, in one-letter code: Conotoxin ArMSGL-0121 (79 aa).

The first 20 residues, 1 to 20, serve as a signal peptide directing secretion; the sequence is MSRLGIMVLTLLLLVFIVTS. The propeptide occupies 21-44; that stretch reads HQDAGEKQATQRNAINFRWRRSFT. 3 cysteine pairs are disulfide-bonded: C52–C64, C56–C73, and C63–C77. L78 carries the post-translational modification Leucine amide.

The protein belongs to the conotoxin O3 superfamily. Expressed by the venom duct.

It is found in the secreted. The protein is Conotoxin ArMSGL-0121 of Conus arenatus (Sand-dusted cone).